The sequence spans 317 residues: Glutathione synthetase (317 aa).

One can recognise an ATP-grasp domain in the interval 124-310 (EKLFTAWFPE…ITGKLMDAIE (187 aa)). An ATP-binding site is contributed by 150-207 (FRQEHGDIILKPLDGMGGASIFRVKENDPNVSVIIETLTNHGQNYAMAQTFVPDISNG). Mg(2+)-binding residues include E281 and N283.

It belongs to the prokaryotic GSH synthase family. Requires Mg(2+) as cofactor. It depends on Mn(2+) as a cofactor.

It carries out the reaction gamma-L-glutamyl-L-cysteine + glycine + ATP = glutathione + ADP + phosphate + H(+). Its pathway is sulfur metabolism; glutathione biosynthesis; glutathione from L-cysteine and L-glutamate: step 2/2. This chain is Glutathione synthetase, found in Vibrio vulnificus (strain CMCP6).